Consider the following 591-residue polypeptide: Fidgetin-like protein 1 (591 aa).

2 disordered regions span residues 1–117 and 223–249; these read MYSP…KSSL and GQEP…SQPI. A compositionally biased stretch (basic and acidic residues) spans 17–26; sequence KRPETEENRG. Over residues 76 to 93 the composition is skewed to acidic residues; that stretch reads DDDPESIVIDEDDEEDEP. The segment covering 237 to 249 has biased composition (polar residues); the sequence is RQSSSQSNHSQPI. ATP contacts are provided by residues Ala319 and 359–364; that span reads GTGKTM.

Belongs to the AAA ATPase family. As to quaternary structure, hexamer. The cofactor is Mg(2+).

Its subcellular location is the nucleus. The catalysed reaction is ATP + H2O = ADP + phosphate + H(+). Has a role in spindle assembly which acts in the progression through mitosis during embryogenesis. Required for fertility. The polypeptide is Fidgetin-like protein 1 (figl-1) (Caenorhabditis briggsae).